Consider the following 518-residue polypeptide: Nitrogenase iron-iron protein alpha chain (518 aa).

Residues C49 and C75 each contribute to the [8Fe-7S] cluster site. C257 and H423 together coordinate [8Fe-9S-C-homocitryl] cluster.

Hexamer of two alpha, two beta, and two delta chains. [8Fe-7S] cluster is required as a cofactor. The cofactor is [8Fe-9S-C-homocitryl] cluster.

It catalyses the reaction N2 + 8 reduced [2Fe-2S]-[ferredoxin] + 16 ATP + 16 H2O = H2 + 8 oxidized [2Fe-2S]-[ferredoxin] + 2 NH4(+) + 16 ADP + 16 phosphate + 6 H(+). Functionally, this iron-iron protein is part of the nitrogenase complex that catalyzes the key enzymatic reactions in nitrogen fixation. Other nitrogenase complexes utilize a molybdenum-iron protein or a vanadium-iron protein. This is Nitrogenase iron-iron protein alpha chain (anfD) from Ruminiclostridium hungatei (Clostridium hungatei).